We begin with the raw amino-acid sequence, 161 residues long: Nucleotide-binding protein Glov_3198 (161 aa).

Belongs to the YajQ family.

Functionally, nucleotide-binding protein. The chain is Nucleotide-binding protein Glov_3198 from Trichlorobacter lovleyi (strain ATCC BAA-1151 / DSM 17278 / SZ) (Geobacter lovleyi).